We begin with the raw amino-acid sequence, 389 residues long: PqqA peptide cyclase (389 aa).

In terms of domain architecture, Radical SAM core spans 19-235 (VGLPLWLLAE…NEYRVRLEAE (217 aa)). [4Fe-4S] cluster-binding residues include cysteine 33, cysteine 37, and cysteine 40.

Belongs to the radical SAM superfamily. PqqE family. As to quaternary structure, interacts with PqqD. The interaction is necessary for activity of PqqE. It depends on [4Fe-4S] cluster as a cofactor.

It carries out the reaction [PQQ precursor protein] + S-adenosyl-L-methionine = E-Y cross-linked-[PQQ precursor protein] + 5'-deoxyadenosine + L-methionine + H(+). The protein operates within cofactor biosynthesis; pyrroloquinoline quinone biosynthesis. In terms of biological role, catalyzes the cross-linking of a glutamate residue and a tyrosine residue in the PqqA protein as part of the biosynthesis of pyrroloquinoline quinone (PQQ). The polypeptide is PqqA peptide cyclase (Pseudomonas savastanoi pv. phaseolicola (strain 1448A / Race 6) (Pseudomonas syringae pv. phaseolicola (strain 1448A / Race 6))).